The following is a 188-amino-acid chain: Peptidyl-tRNA hydrolase (188 aa).

Tyrosine 14 contacts tRNA. Residue histidine 19 is the Proton acceptor of the active site. The tRNA site is built by phenylalanine 64, asparagine 66, and asparagine 112.

It belongs to the PTH family. In terms of assembly, monomer.

It is found in the cytoplasm. The enzyme catalyses an N-acyl-L-alpha-aminoacyl-tRNA + H2O = an N-acyl-L-amino acid + a tRNA + H(+). Its function is as follows. Hydrolyzes ribosome-free peptidyl-tRNAs (with 1 or more amino acids incorporated), which drop off the ribosome during protein synthesis, or as a result of ribosome stalling. In terms of biological role, catalyzes the release of premature peptidyl moieties from peptidyl-tRNA molecules trapped in stalled 50S ribosomal subunits, and thus maintains levels of free tRNAs and 50S ribosomes. The protein is Peptidyl-tRNA hydrolase of Enterococcus faecalis (strain ATCC 700802 / V583).